The primary structure comprises 430 residues: Endo-beta-1,4-glucanase celB (430 aa).

Residues 1 to 16 (MALLLSLSLLATTISA) form the signal peptide. 2 N-linked (GlcNAc...) asparagine glycosylation sites follow: Asn43 and Asn153. The Nucleophile role is filled by Glu216. The active-site Proton donor is Glu221. A glycan (N-linked (GlcNAc...) asparagine) is linked at Asn395.

It belongs to the glycosyl hydrolase 7 (cellulase C) family.

The protein localises to the secreted. It carries out the reaction Endohydrolysis of (1-&gt;4)-beta-D-glucosidic linkages in cellulose, lichenin and cereal beta-D-glucans.. Has endoglucanase activity on substrates containing beta-1,4 glycosidic bonds, like in carboxymethylcellulose (CMC), hydroxyethylcellulose (HEC) and beta-glucan. Involved in the degradation of complex natural cellulosic substrates. The polypeptide is Endo-beta-1,4-glucanase celB (celB) (Emericella nidulans (strain FGSC A4 / ATCC 38163 / CBS 112.46 / NRRL 194 / M139) (Aspergillus nidulans)).